The sequence spans 154 residues: Nuclear cap-binding protein subunit 2 (154 aa).

Positions 1-23 (MSTSVDLSSYRDQHFKGSRSEQE) are disordered. The span at 9–23 (SYRDQHFKGSRSEQE) shows a compositional bias: basic and acidic residues. MRNA-binding positions include tyrosine 10, tyrosine 33, 102 to 106 (RVDWD), 113 to 117 (RQYGR), and 123 to 124 (QV). An RRM domain is found at 30–108 (TTLYVGNLSF…RLIRVDWDAG (79 aa)).

Belongs to the RRM NCBP2 family. As to quaternary structure, component of the nuclear cap-binding complex (CBC), a heterodimer composed of Cbp80 and Cbp20 that interacts with m7GpppG-capped RNA. Interacts with Ars2.

The protein localises to the nucleus. In terms of biological role, component of the cap-binding complex (CBC), which binds co-transcriptionally to the 5' cap of pre-mRNAs and is involved in various processes such as pre-mRNA splicing and RNA-mediated gene silencing (RNAi). The CBC complex is involved in miRNA-mediated RNA interference via its interaction with Ars2 and is required for primary microRNAs (miRNAs) processing. Also involved in innate immunity via the short interfering RNAs (siRNAs) processing machinery by restricting the viral RNA production. In the CBC complex, Cbp20 recognizes and binds capped RNAs (m7GpppG-capped RNA) but requires Cbp80 to stabilize the movement of its N-terminal loop and lock the CBC into a high affinity cap-binding state with the cap structure. The chain is Nuclear cap-binding protein subunit 2 (Cbp20) from Drosophila ananassae (Fruit fly).